The chain runs to 81 residues: MDGGQPIPSSLVPLGNESADSSMSLEQKMTFVFVILLFIFLGILIVRCFRILLDPYRSMPTSTWADGLEGLEKGQFDHALA.

A helical transmembrane segment spans residues 29–49; that stretch reads MTFVFVILLFIFLGILIVRCF.

It belongs to the cortexin family.

Its subcellular location is the membrane. The sequence is that of Cortexin-3 (CTXN3) from Homo sapiens (Human).